A 287-amino-acid chain; its full sequence is Bifunctional protein FolD 1 (287 aa).

NADP(+) contacts are provided by residues 170 to 172 (GRS) and Ser-195.

This sequence belongs to the tetrahydrofolate dehydrogenase/cyclohydrolase family. In terms of assembly, homodimer.

The enzyme catalyses (6R)-5,10-methylene-5,6,7,8-tetrahydrofolate + NADP(+) = (6R)-5,10-methenyltetrahydrofolate + NADPH. The catalysed reaction is (6R)-5,10-methenyltetrahydrofolate + H2O = (6R)-10-formyltetrahydrofolate + H(+). It participates in one-carbon metabolism; tetrahydrofolate interconversion. Functionally, catalyzes the oxidation of 5,10-methylenetetrahydrofolate to 5,10-methenyltetrahydrofolate and then the hydrolysis of 5,10-methenyltetrahydrofolate to 10-formyltetrahydrofolate. This Streptomyces avermitilis (strain ATCC 31267 / DSM 46492 / JCM 5070 / NBRC 14893 / NCIMB 12804 / NRRL 8165 / MA-4680) protein is Bifunctional protein FolD 1.